A 104-amino-acid polypeptide reads, in one-letter code: DNA-directed RNA polymerase subunit Rpo13 (104 aa).

2 disordered regions span residues 1 to 33 (MVSGMSTDEEKEGTSDEEVNEEKEVEETSEDEF) and 78 to 104 (RDSRRKAKKAVSKKVKKTKKKEKSVEG). Positions 7–31 (TDEEKEGTSDEEVNEEKEVEETSED) are enriched in acidic residues. The span at 80-104 (SRRKAKKAVSKKVKKTKKKEKSVEG) shows a compositional bias: basic residues.

It belongs to the archaeal Rpo13 RNA polymerase subunit family. As to quaternary structure, part of the 13-subunit RNA polymerase complex.

The protein resides in the cytoplasm. The enzyme catalyses RNA(n) + a ribonucleoside 5'-triphosphate = RNA(n+1) + diphosphate. DNA-dependent RNA polymerase (RNAP) catalyzes the transcription of DNA into RNA using the four ribonucleoside triphosphates as substrates. Probably binds dsDNA. In Saccharolobus solfataricus (strain ATCC 35092 / DSM 1617 / JCM 11322 / P2) (Sulfolobus solfataricus), this protein is DNA-directed RNA polymerase subunit Rpo13.